The primary structure comprises 118 residues: Small ribosomal subunit protein uS13 (118 aa).

Residues S94 to R118 are disordered.

The protein belongs to the universal ribosomal protein uS13 family. In terms of assembly, part of the 30S ribosomal subunit. Forms a loose heterodimer with protein S19. Forms two bridges to the 50S subunit in the 70S ribosome.

Its function is as follows. Located at the top of the head of the 30S subunit, it contacts several helices of the 16S rRNA. In the 70S ribosome it contacts the 23S rRNA (bridge B1a) and protein L5 of the 50S subunit (bridge B1b), connecting the 2 subunits; these bridges are implicated in subunit movement. Contacts the tRNAs in the A and P-sites. This chain is Small ribosomal subunit protein uS13, found in Pseudoalteromonas translucida (strain TAC 125).